The sequence spans 385 residues: Protein pelota homolog (385 aa).

Lys162 participates in a covalent cross-link: Glycyl lysine isopeptide (Lys-Gly) (interchain with G-Cter in SUMO2). 4 positions are modified to phosphoserine: Ser374, Ser380, Ser381, and Ser382.

This sequence belongs to the eukaryotic release factor 1 family. Pelota subfamily. Component of the Pelota-HBS1L complex, also named Dom34-Hbs1 complex, composed of PELO and HBS1L. Interacts with PINK1. Interacts with ABCE1. Interacts with CNOT4. The cofactor is a divalent metal cation. As to expression, ubiquitously expressed.

The protein localises to the cytoplasm. Functionally, component of the Pelota-HBS1L complex, a complex that recognizes stalled ribosomes and triggers the No-Go Decay (NGD) pathway. In the Pelota-HBS1L complex, PELO recognizes ribosomes stalled at the 3' end of an mRNA and engages stalled ribosomes by destabilizing mRNA in the mRNA channel. Following mRNA extraction from stalled ribosomes by the SKI complex, the Pelota-HBS1L complex promotes recruitment of ABCE1, which drives the disassembly of stalled ribosomes, followed by degradation of damaged mRNAs as part of the NGD pathway. As part of the PINK1-regulated signaling, upon mitochondrial damage is recruited to the ribosome/mRNA-ribonucleoprotein complex associated to mitochondrial outer membrane thereby enabling the recruitment of autophagy receptors and induction of mitophagy. This is Protein pelota homolog from Homo sapiens (Human).